Consider the following 344-residue polypeptide: Holliday junction branch migration complex subunit RuvB (344 aa).

A large ATPase domain (RuvB-L) region spans residues 1–182 (MSDRLISATA…FGIISRLEFY (182 aa)). ATP is bound by residues leucine 21, arginine 22, glycine 63, lysine 66, threonine 67, threonine 68, 129–131 (EDF), arginine 172, tyrosine 182, and arginine 219. Position 67 (threonine 67) interacts with Mg(2+). The small ATPAse domain (RuvB-S) stretch occupies residues 183–253 (NNEDLTRIVT…VAAEALEFFE (71 aa)). The head domain (RuvB-H) stretch occupies residues 256 to 344 (PLGLDHTDRR…QKGLEQNSLF (89 aa)). Residues arginine 311 and arginine 316 each coordinate DNA.

This sequence belongs to the RuvB family. As to quaternary structure, homohexamer. Forms an RuvA(8)-RuvB(12)-Holliday junction (HJ) complex. HJ DNA is sandwiched between 2 RuvA tetramers; dsDNA enters through RuvA and exits via RuvB. An RuvB hexamer assembles on each DNA strand where it exits the tetramer. Each RuvB hexamer is contacted by two RuvA subunits (via domain III) on 2 adjacent RuvB subunits; this complex drives branch migration. In the full resolvosome a probable DNA-RuvA(4)-RuvB(12)-RuvC(2) complex forms which resolves the HJ.

Its subcellular location is the cytoplasm. The catalysed reaction is ATP + H2O = ADP + phosphate + H(+). The RuvA-RuvB-RuvC complex processes Holliday junction (HJ) DNA during genetic recombination and DNA repair, while the RuvA-RuvB complex plays an important role in the rescue of blocked DNA replication forks via replication fork reversal (RFR). RuvA specifically binds to HJ cruciform DNA, conferring on it an open structure. The RuvB hexamer acts as an ATP-dependent pump, pulling dsDNA into and through the RuvAB complex. RuvB forms 2 homohexamers on either side of HJ DNA bound by 1 or 2 RuvA tetramers; 4 subunits per hexamer contact DNA at a time. Coordinated motions by a converter formed by DNA-disengaged RuvB subunits stimulates ATP hydrolysis and nucleotide exchange. Immobilization of the converter enables RuvB to convert the ATP-contained energy into a lever motion, pulling 2 nucleotides of DNA out of the RuvA tetramer per ATP hydrolyzed, thus driving DNA branch migration. The RuvB motors rotate together with the DNA substrate, which together with the progressing nucleotide cycle form the mechanistic basis for DNA recombination by continuous HJ branch migration. Branch migration allows RuvC to scan DNA until it finds its consensus sequence, where it cleaves and resolves cruciform DNA. This is Holliday junction branch migration complex subunit RuvB from Desulforamulus reducens (strain ATCC BAA-1160 / DSM 100696 / MI-1) (Desulfotomaculum reducens).